A 459-amino-acid polypeptide reads, in one-letter code: tRNA modification GTPase MnmE (459 aa).

(6S)-5-formyl-5,6,7,8-tetrahydrofolate is bound by residues R22, E85, and R124. The 160-residue stretch at 221-380 folds into the TrmE-type G domain; it reads GLSTVIVGKP…LEIQIRDLFF (160 aa). N231 is a binding site for K(+). Residues 231-236, 250-256, and 275-278 contribute to the GTP site; these read NVGKSS, TEVAGTT, and DTAG. S235 is a Mg(2+) binding site. K(+) is bound by residues T250, V252, and T255. T256 is a Mg(2+) binding site. Position 459 (K459) interacts with (6S)-5-formyl-5,6,7,8-tetrahydrofolate.

The protein belongs to the TRAFAC class TrmE-Era-EngA-EngB-Septin-like GTPase superfamily. TrmE GTPase family. As to quaternary structure, homodimer. Heterotetramer of two MnmE and two MnmG subunits. K(+) serves as cofactor.

It is found in the cytoplasm. Its function is as follows. Exhibits a very high intrinsic GTPase hydrolysis rate. Involved in the addition of a carboxymethylaminomethyl (cmnm) group at the wobble position (U34) of certain tRNAs, forming tRNA-cmnm(5)s(2)U34. The polypeptide is tRNA modification GTPase MnmE (Staphylococcus aureus (strain USA300 / TCH1516)).